The chain runs to 528 residues: Beta-hexosaminidase subunit alpha (528 aa).

The N-terminal stretch at 1–22 is a signal peptide; sequence MAGCRLWVSLLLAAALACLATA. Residues 23–88 constitute a propeptide that is removed on maturation; the sequence is LWPWPQYIQT…PRPSFSNKQQ (66 aa). C58 and C104 are disulfide-bonded. N115, N157, and N295 each carry an N-linked (GlcNAc...) asparagine glycan. The cysteines at positions 277 and 328 are disulfide-linked. Residue E323 is the Proton donor of the active site. Positions 422-423 are critical for hydrolysis GM2 gangliosides; it reads NR. The N-linked (GlcNAc...) asparagine glycan is linked to N487. C504 and C521 are joined by a disulfide.

Belongs to the glycosyl hydrolase 20 family. As to quaternary structure, there are 3 beta-hexosaminidase isozymes: isozyme A (hexosaminidase A) is a heterodimer composed of one subunit alpha and one subunit beta (chain A and B); isozyme B (hexosaminidase B) is a homodimer of two beta subunits (two chains A and B); isozyme S (hexosaminidase S) is a homodimer of two alpha subunits. The composition of the dimer (isozyme A versus isozyme S) has a significant effect on the substrate specificity of the alpha subunit active site. In terms of tissue distribution, ubiquitous. Most abundant in testis, adrenal, epididymis and heart. Low levels seen in the liver.

The protein resides in the lysosome. The catalysed reaction is Hydrolysis of terminal non-reducing N-acetyl-D-hexosamine residues in N-acetyl-beta-D-hexosaminides.. It carries out the reaction N-acetyl-beta-D-galactosaminyl-(1-&gt;4)-beta-D-3-sulfogalactosyl-(1-&gt;4)-beta-D-glucosyl-(1&lt;-&gt;1')-ceramide + H2O = a beta-D-3-sulfogalactosyl-(1-&gt;4)-beta-D-glucosyl-(1&lt;-&gt;1')-ceramide + N-acetyl-beta-D-galactosamine. It catalyses the reaction a ganglioside GM2 (d18:1(4E)) + H2O = a ganglioside GM3 (d18:1(4E)) + N-acetyl-beta-D-galactosamine. The enzyme catalyses a ganglioside GM2 + H2O = a ganglioside GM3 + N-acetyl-beta-D-galactosamine. The catalysed reaction is beta-D-GalNAc-(1-&gt;4)-alpha-L-IdoA-(1-&gt;3)-beta-D-GalNAc-4-sulfate-(1-&gt;4)-alpha-L-IdoA-(1-&gt;3)-D-GalNAc-4-sulfate + H2O = alpha-L-IdoA-(1-&gt;3)-beta-D-GalNAc-4-sulfate-(1-&gt;4)-alpha-L-IdoA-(1-&gt;3)-D-GalNAc-4-sulfate + N-acetyl-D-galactosamine. It carries out the reaction N-acetyl-beta-D-6-sulfogalactosaminyl-(1-&gt;4)-alpha-L-iduronyl-(1-&gt;3)-N-acetyl-D-6-sulfogalactosamine + H2O = alpha-L-iduronyl-(1-&gt;3)-N-acetyl-D-6-sulfogalactosamine + N-acetyl-D-6-sulfogalactosamine. Its activity is regulated as follows. Addition of GM2A stimulates the hydrolysis of sulfated glycosphingolipid SM2 and the ganglioside GM2. Its function is as follows. Hydrolyzes the non-reducing end N-acetyl-D-hexosamine and/or sulfated N-acetyl-D-hexosamine of glycoconjugates, such as the oligosaccharide moieties from proteins and neutral glycolipids, or from certain mucopolysaccharides. The isozyme S is as active as the isozyme A on the anionic bis-sulfated glycans, the chondroitin-6-sulfate trisaccharide (C6S-3), and the dermatan sulfate pentasaccharide, and the sulfated glycosphingolipid SM2. The isozyme B does not hydrolyze each of these substrates, however hydrolyzes efficiently neutral oligosaccharide. Only the isozyme A is responsible for the degradation of GM2 gangliosides in the presence of GM2A. The chain is Beta-hexosaminidase subunit alpha from Mus musculus (Mouse).